The sequence spans 55 residues: Large ribosomal subunit protein bL33 (55 aa).

The protein belongs to the bacterial ribosomal protein bL33 family.

In Rhodopseudomonas palustris (strain BisA53), this protein is Large ribosomal subunit protein bL33.